The primary structure comprises 565 residues: NAD-dependent malic enzyme (565 aa).

Catalysis depends on tyrosine 104, which acts as the Proton donor. Arginine 157 provides a ligand contact to NAD(+). Lysine 175 serves as the catalytic Proton acceptor. Residues glutamate 246, aspartate 247, and aspartate 270 each contribute to the a divalent metal cation site. Residues aspartate 270 and asparagine 418 each coordinate NAD(+).

The protein belongs to the malic enzymes family. As to quaternary structure, homotetramer. It depends on Mg(2+) as a cofactor. The cofactor is Mn(2+).

The catalysed reaction is (S)-malate + NAD(+) = pyruvate + CO2 + NADH. It carries out the reaction oxaloacetate + H(+) = pyruvate + CO2. In Sodalis glossinidius (strain morsitans), this protein is NAD-dependent malic enzyme.